A 508-amino-acid chain; its full sequence is Cytochrome P450 4A12 (508 aa).

2 helical membrane-spanning segments follow: residues 10–30 and 120–140; these read IFPG…VLLL and FLAP…WFQH. Heme is bound at residue E319. S438 carries the phosphoserine modification. A heme-binding site is contributed by C455.

This sequence belongs to the cytochrome P450 family. Heme is required as a cofactor. In terms of tissue distribution, expressed at proximal straight tubules and preglomerular arteries of the outer medulla as well in the cortex regions of kidney (at protein level).

It localises to the endoplasmic reticulum membrane. It is found in the microsome membrane. The catalysed reaction is an organic molecule + reduced [NADPH--hemoprotein reductase] + O2 = an alcohol + oxidized [NADPH--hemoprotein reductase] + H2O + H(+). The enzyme catalyses dodecanoate + reduced [NADPH--hemoprotein reductase] + O2 = 12-hydroxydodecanoate + oxidized [NADPH--hemoprotein reductase] + H2O + H(+). It catalyses the reaction dodecanoate + reduced [NADPH--hemoprotein reductase] + O2 = (11R)-hydroxydodecanoate + oxidized [NADPH--hemoprotein reductase] + H2O + H(+). It carries out the reaction (5Z,8Z,11Z,14Z)-eicosatetraenoate + reduced [NADPH--hemoprotein reductase] + O2 = 20-hydroxy-(5Z,8Z,11Z,14Z)-eicosatetraenoate + oxidized [NADPH--hemoprotein reductase] + H2O + H(+). The catalysed reaction is prostaglandin A1 + reduced [NADPH--hemoprotein reductase] + O2 = 20-hydroxy prostaglandin A1 + oxidized [NADPH--hemoprotein reductase] + H2O + H(+). It participates in lipid metabolism; fatty acid metabolism. Its activity is regulated as follows. Activated by cytochrome b5 and phosphatidylserine. A cytochrome P450 monooxygenase involved in the metabolism of fatty acids. Catalyzes predominantly the oxidation of the terminal carbon (omega-oxidation) of saturated and unsaturated fatty acids. May act as a major omega-hydroxylase for dodecanoic (lauric) acid in kidney. At preglomerular arteries, may participate in omega-hydroxylation of (5Z,8Z,11Z,14Z)-eicosatetraenoic acid (arachidonate) to 20-hydroxyeicosatetraenoic acid (20-HETE), a signaling molecule acting both as vasoconstrictive and natriuretic with overall effect on arterial blood pressure. Can also catalyze the oxidation of the penultimate carbon (omega-1 oxidation) of fatty acids with lower efficiency, displaying a preference for the (R)-stereoisomer. Mechanistically, uses molecular oxygen inserting one oxygen atom into a substrate, and reducing the second into a water molecule, with two electrons provided by NADPH via cytochrome P450 reductase (NADPH--hemoprotein reductase). This Rattus norvegicus (Rat) protein is Cytochrome P450 4A12 (Cyp4a12).